A 512-amino-acid polypeptide reads, in one-letter code: Opioid growth factor receptor-like protein 1 (512 aa).

3 disordered regions span residues 1–72 (MGNI…ETGT), 323–469 (IWGP…TCCK), and 488–512 (SLSP…GPFT). 2 stretches are compositionally biased toward acidic residues: residues 28–54 (GGEE…DNEE) and 62–71 (TNEGGEEETG). Positions 328-337 (DKQKADENKA) are enriched in basic and acidic residues. The segment covering 347 to 361 (QKKHSHVEKKSRPAK) has biased composition (basic residues). The segment covering 408-421 (TVTSENNSSKTGQT) has biased composition (polar residues). The span at 449–468 (RSLDTEHDLKRPEADRETCC) shows a compositional bias: basic and acidic residues. A compositionally biased stretch (polar residues) spans 490-499 (SPGTSNSNVT).

This sequence belongs to the opioid growth factor receptor family.

The sequence is that of Opioid growth factor receptor-like protein 1 (ogfrl1) from Xenopus tropicalis (Western clawed frog).